Here is a 338-residue protein sequence, read N- to C-terminus: MGNWPHKHILTLSNFSIDDYESVIELTERFKSLNNAGTKKIPALQGKLITSIFFEASTRTRNSFELAAKRLSADVQSFSPSSSSLSKGETLIDTALTYAAMGSDILVIRHSSSHVPLEISKKLDASKAKTSVLNAGDGLHSHPSQGLLDLYTLIKFFSPKLLKPEILNSKKILIVGDVIHSRVARSNLWALTAFGANIILCGPPTLIPEEFTDFVSSSPPNQLRDPISSRGSITISSSLEESIKCADAVIVLRLQKERMIENLLSSIKSYSENYCLTPEKLSLNCKDIPILHPGPINRGIEISSRVVDEYPNCLINDQVSNGIPTRMALLYLLSKFNN.

Carbamoyl phosphate contacts are provided by R59 and T60. K87 provides a ligand contact to L-aspartate. 3 residues coordinate carbamoyl phosphate: R109, H142, and Q145. Residues R182 and R253 each contribute to the L-aspartate site. Carbamoyl phosphate is bound by residues G294 and P295.

Belongs to the aspartate/ornithine carbamoyltransferase superfamily. ATCase family. Heterododecamer (2C3:3R2) of six catalytic PyrB chains organized as two trimers (C3), and six regulatory PyrI chains organized as three dimers (R2).

The enzyme catalyses carbamoyl phosphate + L-aspartate = N-carbamoyl-L-aspartate + phosphate + H(+). The protein operates within pyrimidine metabolism; UMP biosynthesis via de novo pathway; (S)-dihydroorotate from bicarbonate: step 2/3. Catalyzes the condensation of carbamoyl phosphate and aspartate to form carbamoyl aspartate and inorganic phosphate, the committed step in the de novo pyrimidine nucleotide biosynthesis pathway. The protein is Aspartate carbamoyltransferase catalytic subunit of Prochlorococcus marinus subsp. pastoris (strain CCMP1986 / NIES-2087 / MED4).